We begin with the raw amino-acid sequence, 377 residues long: MPHSVTPSIEQDSLKIAILGAAGGIGQSLSLLLKAQLQYQLKESNRSVTHIHLALYDVNQEAINGVTADLSHIDTPISVSSHSPAGGIENCLHNASIVVIPAGVPRKPGMTRDDLFNVNAGIISQLGDSIAECCDLSKVFVLVISNPVNSLVPVMVSNILKNHPQSRNSGIERRIMGVTKLDIVRASTFLREINIESGLTPRVNSMPDVPVIGGHSGETIIPLFSQSNFLSRLNEDQLKYLIHRVQYGGDEVVKAKNGKGSATLSMAHAGYKCVVQFVSLLLGNIEQIHGTYYVPLKDANNFPIAPGADQLLPLVDGADYFAIPLTITTKGVSYVDYDIVNRMNDMERNQMLPICVSQLKKNIDKGLEFVASRSASS.

The Pro/N-degron signature appears at 2 to 5 (PHSV). T6 is modified (phosphothreonine). NAD(+) contacts are provided by residues 20 to 26 (GAAGGIG) and D57. R106 and R112 together coordinate substrate. Residues N119 and 144 to 146 (ISN) contribute to the NAD(+) site. Substrate is bound by residues N146 and R185. H215 acts as the Proton acceptor in catalysis. M266 contributes to the NAD(+) binding site.

It belongs to the LDH/MDH superfamily. MDH type 1 family. As to quaternary structure, homodimer. Targeted for proteasomal degradation when cells are shifted to glucose-containing growth medium.

The protein resides in the cytoplasm. The catalysed reaction is (S)-malate + NAD(+) = oxaloacetate + NADH + H(+). Functionally, the isoenzyme MDH2 may function primarily in the glyoxylate cycle. The sequence is that of Malate dehydrogenase, cytoplasmic (MDH2) from Saccharomyces cerevisiae (strain ATCC 204508 / S288c) (Baker's yeast).